The primary structure comprises 191 residues: Stress response regulator protein 1 (191 aa).

The Response regulatory domain occupies Ser62–Gln181. At Asp114 the chain carries 4-aspartylphosphate.

Its function is as follows. Required for stress adaptation, morphogenesis and virulence. This Clavispora lusitaniae (strain ATCC 42720) (Yeast) protein is Stress response regulator protein 1 (SRR1).